Consider the following 1578-residue polypeptide: Pentafunctional AROM polypeptide (1578 aa).

Residues 1-393 (MSVELAKVSI…YGTSAHVVSD (393 aa)) are 3-dehydroquinate synthase. NAD(+) contacts are provided by residues 44–46 (DTN), 79–82 (EAHK), 110–112 (GGV), and Asp115. Arg126 is a binding site for 7-phospho-2-dehydro-3-deoxy-D-arabino-heptonate. Residue 135–136 (TS) participates in NAD(+) binding. 7-phospho-2-dehydro-3-deoxy-D-arabino-heptonate contacts are provided by Asp142 and Lys148. Lys157 serves as a coordination point for NAD(+). A 7-phospho-2-dehydro-3-deoxy-D-arabino-heptonate-binding site is contributed by Asn158. NAD(+)-binding positions include 175 to 178 (WLET) and Asn186. Residue Glu190 participates in Zn(2+) binding. Residues 190-193 (EVIK) and Lys259 contribute to the 7-phospho-2-dehydro-3-deoxy-D-arabino-heptonate site. Catalysis depends on Glu269, which acts as the Proton acceptor; for 3-dehydroquinate synthase activity. 7-phospho-2-dehydro-3-deoxy-D-arabino-heptonate contacts are provided by residues 273 to 277 (RNLLN) and His280. His280 contributes to the Zn(2+) binding site. His284 acts as the Proton acceptor; for 3-dehydroquinate synthase activity in catalysis. 7-phospho-2-dehydro-3-deoxy-D-arabino-heptonate contacts are provided by His296 and Lys365. Position 296 (His296) interacts with Zn(2+). Residues 406–863 (VHPFNNIPEG…WDVLHSQLGA (458 aa)) are EPSP synthase. The For EPSP synthase activity role is filled by Cys845. The tract at residues 882-1071 (VVIIGMRAAG…VPSRRSAFVC (190 aa)) is shikimate kinase. 886-893 (GMRAAGKS) contributes to the ATP binding site. The tract at residues 1072–1284 (LTFEDLSDHL…AAPGQLTLAE (213 aa)) is 3-dehydroquinase. Residue His1189 is the Proton acceptor; for 3-dehydroquinate dehydratase activity of the active site. Lys1218 serves as the catalytic Schiff-base intermediate with substrate; for 3-dehydroquinate dehydratase activity. The interval 1297–1578 (AKKFFVIGSP…KAIFDAVTQE (282 aa)) is shikimate dehydrogenase.

In the N-terminal section; belongs to the sugar phosphate cyclases superfamily. Dehydroquinate synthase family. This sequence in the 2nd section; belongs to the EPSP synthase family. It in the 3rd section; belongs to the shikimate kinase family. The protein in the 4th section; belongs to the type-I 3-dehydroquinase family. In the C-terminal section; belongs to the shikimate dehydrogenase family. In terms of assembly, homodimer. Zn(2+) serves as cofactor.

The protein resides in the cytoplasm. The enzyme catalyses 7-phospho-2-dehydro-3-deoxy-D-arabino-heptonate = 3-dehydroquinate + phosphate. It catalyses the reaction 3-dehydroquinate = 3-dehydroshikimate + H2O. The catalysed reaction is shikimate + NADP(+) = 3-dehydroshikimate + NADPH + H(+). It carries out the reaction shikimate + ATP = 3-phosphoshikimate + ADP + H(+). The enzyme catalyses 3-phosphoshikimate + phosphoenolpyruvate = 5-O-(1-carboxyvinyl)-3-phosphoshikimate + phosphate. It functions in the pathway metabolic intermediate biosynthesis; chorismate biosynthesis; chorismate from D-erythrose 4-phosphate and phosphoenolpyruvate: step 2/7. Its pathway is metabolic intermediate biosynthesis; chorismate biosynthesis; chorismate from D-erythrose 4-phosphate and phosphoenolpyruvate: step 3/7. The protein operates within metabolic intermediate biosynthesis; chorismate biosynthesis; chorismate from D-erythrose 4-phosphate and phosphoenolpyruvate: step 4/7. It participates in metabolic intermediate biosynthesis; chorismate biosynthesis; chorismate from D-erythrose 4-phosphate and phosphoenolpyruvate: step 5/7. It functions in the pathway metabolic intermediate biosynthesis; chorismate biosynthesis; chorismate from D-erythrose 4-phosphate and phosphoenolpyruvate: step 6/7. Functionally, the AROM polypeptide catalyzes 5 consecutive enzymatic reactions in prechorismate polyaromatic amino acid biosynthesis. This is Pentafunctional AROM polypeptide from Kluyveromyces lactis (strain ATCC 8585 / CBS 2359 / DSM 70799 / NBRC 1267 / NRRL Y-1140 / WM37) (Yeast).